The chain runs to 119 residues: Putative F-box protein At2g39415 (119 aa).

Residues 37–92 (IDSISSLPDVILQQILSSLPTNLAIRTSVLSTRWRHVWSDTPYIYFDGPGTLYRGL) enclose the F-box domain.

This is Putative F-box protein At2g39415 from Arabidopsis thaliana (Mouse-ear cress).